A 296-amino-acid chain; its full sequence is Small ribosomal subunit protein uS2m (296 aa).

Positions 274 to 296 (QGQKEPGDQGPAHPPGADMSHSL) are disordered.

This sequence belongs to the universal ribosomal protein uS2 family. In terms of assembly, component of the mitochondrial small ribosomal subunit (mt-SSU). Mature mammalian 55S mitochondrial ribosomes consist of a small (28S) and a large (39S) subunit. The 28S small subunit contains a 12S ribosomal RNA (12S mt-rRNA) and 30 different proteins. The 39S large subunit contains a 16S rRNA (16S mt-rRNA), a copy of mitochondrial valine transfer RNA (mt-tRNA(Val)), which plays an integral structural role, and 52 different proteins.

It localises to the mitochondrion. Functionally, required for mitoribosome formation and stability, and mitochondrial translation. The sequence is that of Small ribosomal subunit protein uS2m (MRPS2) from Homo sapiens (Human).